The following is a 139-amino-acid chain: MSRRTARKQAFFILYQSDVTGSPAEPLIGRWRAYRGELEDYAERVVRGVERERERLDAVLDGVSEGWPVWRMSAVDRTILRLALYEMLHVQDVPPEVAVNEAVELAKGFSGEEAPSFVGGVLRGAEDKIFGKVGDGEPG.

This sequence belongs to the NusB family.

In terms of biological role, involved in transcription antitermination. Required for transcription of ribosomal RNA (rRNA) genes. Binds specifically to the boxA antiterminator sequence of the ribosomal RNA (rrn) operons. The sequence is that of Transcription antitermination protein NusB from Rubrobacter xylanophilus (strain DSM 9941 / JCM 11954 / NBRC 16129 / PRD-1).